The sequence spans 105 residues: Acylphosphatase (105 aa).

Positions 16–105 (RLTAWVRGRV…RGGYSGFTQA (90 aa)) constitute an Acylphosphatase-like domain. Active-site residues include Arg-31 and Asn-49.

Belongs to the acylphosphatase family.

It carries out the reaction an acyl phosphate + H2O = a carboxylate + phosphate + H(+). The sequence is that of Acylphosphatase (acyP) from Acidothermus cellulolyticus (strain ATCC 43068 / DSM 8971 / 11B).